The chain runs to 213 residues: Thymidylate kinase (213 aa).

Residue 10 to 17 (GLEGAGKT) coordinates ATP.

It belongs to the thymidylate kinase family.

The enzyme catalyses dTMP + ATP = dTDP + ADP. Functionally, phosphorylation of dTMP to form dTDP in both de novo and salvage pathways of dTTP synthesis. The protein is Thymidylate kinase of Escherichia coli O157:H7 (strain EC4115 / EHEC).